Here is a 606-residue protein sequence, read N- to C-terminus: Sporulation kinase A (606 aa).

The PAS 1 domain occupies glutamine 3–methionine 73. The PAC 1 domain maps to phenylalanine 77–glutamate 116. The 75-residue stretch at tyrosine 140 to glycine 214 folds into the PAS 2 domain. The PAC 2 domain occupies glutamine 218–arginine 255. The PAS 3 domain maps to serine 265–lysine 335. In terms of domain architecture, Histidine kinase spans glycine 402–lysine 606. Histidine 405 is modified (phosphohistidine; by autocatalysis).

It carries out the reaction ATP + protein L-histidine = ADP + protein N-phospho-L-histidine.. Phosphorylates the sporulation-regulatory proteins spo0A and spo0F. It also autophosphorylates in the presence of ATP. The sequence is that of Sporulation kinase A (kinA) from Bacillus subtilis (strain 168).